The primary structure comprises 210 residues: Large ribosomal subunit protein bL25 (210 aa).

Residues 191–210 are disordered; it reads KPAPKAAETDEDGEEAASEE. A compositionally biased stretch (acidic residues) spans 199–210; it reads TDEDGEEAASEE.

The protein belongs to the bacterial ribosomal protein bL25 family. CTC subfamily. As to quaternary structure, part of the 50S ribosomal subunit; part of the 5S rRNA/L5/L18/L25 subcomplex. Contacts the 5S rRNA. Binds to the 5S rRNA independently of L5 and L18.

This is one of the proteins that binds to the 5S RNA in the ribosome where it forms part of the central protuberance. This is Large ribosomal subunit protein bL25 from Alteromonas mediterranea (strain DSM 17117 / CIP 110805 / LMG 28347 / Deep ecotype).